We begin with the raw amino-acid sequence, 279 residues long: NADPH-dependent 7-cyano-7-deazaguanine reductase (279 aa).

Residue 86–88 participates in substrate binding; sequence IES. Position 88-89 (88-89) interacts with NADPH; it reads SK. Catalysis depends on cysteine 187, which acts as the Thioimide intermediate. The Proton donor role is filled by aspartate 194. Residue 226–227 coordinates substrate; that stretch reads HE. 255-256 lines the NADPH pocket; it reads RG.

The protein belongs to the GTP cyclohydrolase I family. QueF type 2 subfamily. Homodimer.

Its subcellular location is the cytoplasm. It carries out the reaction 7-aminomethyl-7-carbaguanine + 2 NADP(+) = 7-cyano-7-deazaguanine + 2 NADPH + 3 H(+). The protein operates within tRNA modification; tRNA-queuosine biosynthesis. Catalyzes the NADPH-dependent reduction of 7-cyano-7-deazaguanine (preQ0) to 7-aminomethyl-7-deazaguanine (preQ1). This chain is NADPH-dependent 7-cyano-7-deazaguanine reductase, found in Haemophilus influenzae (strain ATCC 51907 / DSM 11121 / KW20 / Rd).